Here is a 79-residue protein sequence, read N- to C-terminus: Ferredoxin (79 aa).

2 4Fe-4S ferredoxin-type domains span residues 2–30 (PHVICEPCIGVKDQSCVEVCPVECIYDGG) and 31–60 (DQFYIHPEECIDCGACVPACPVNAIYPEED). Positions 9 and 17 each coordinate [3Fe-4S] cluster. Residues C21, C40, C43, and C46 each coordinate [4Fe-4S] cluster. A [3Fe-4S] cluster-binding site is contributed by C50.

[4Fe-4S] cluster serves as cofactor. Requires [3Fe-4S] cluster as cofactor.

In terms of biological role, ferredoxins are iron-sulfur proteins that transfer electrons in a wide variety of metabolic reactions. The protein is Ferredoxin of Thermus thermophilus (strain ATCC 27634 / DSM 579 / HB8).